The primary structure comprises 393 residues: uncharacterized protein (393 aa).

A disordered region spans residues 345–393 (PNKWATDDAARREMERTRKARYRAKNRAVADPEDSPPGKRLRRGPKSST). Over residues 349–361 (ATDDAARREMERT) the composition is skewed to basic and acidic residues. Basic residues predominate over residues 383–393 (KRLRRGPKSST).

This is an uncharacterized protein from Ictalurid herpesvirus 1 (strain Auburn) (IcHV-1).